Reading from the N-terminus, the 281-residue chain is Pantothenate synthetase (281 aa).

30-37 (MGALHRGH) is an ATP binding site. H37 (proton donor) is an active-site residue. Q61 serves as a coordination point for (R)-pantoate. Q61 contacts beta-alanine. Residue 147–150 (GEKD) coordinates ATP. Position 153 (Q153) interacts with (R)-pantoate. ATP-binding positions include I176 and 184–187 (LSSR).

It belongs to the pantothenate synthetase family. In terms of assembly, homodimer.

It is found in the cytoplasm. It catalyses the reaction (R)-pantoate + beta-alanine + ATP = (R)-pantothenate + AMP + diphosphate + H(+). Its pathway is cofactor biosynthesis; (R)-pantothenate biosynthesis; (R)-pantothenate from (R)-pantoate and beta-alanine: step 1/1. In terms of biological role, catalyzes the condensation of pantoate with beta-alanine in an ATP-dependent reaction via a pantoyl-adenylate intermediate. The polypeptide is Pantothenate synthetase (Porphyromonas gingivalis (strain ATCC 33277 / DSM 20709 / CIP 103683 / JCM 12257 / NCTC 11834 / 2561)).